The sequence spans 240 residues: 2,3,4,5-tetrahydropyridine-2,6-dicarboxylate N-acetyltransferase (240 aa).

This sequence belongs to the transferase hexapeptide repeat family. DapH subfamily.

It catalyses the reaction (S)-2,3,4,5-tetrahydrodipicolinate + acetyl-CoA + H2O = L-2-acetamido-6-oxoheptanedioate + CoA. Its pathway is amino-acid biosynthesis; L-lysine biosynthesis via DAP pathway; LL-2,6-diaminopimelate from (S)-tetrahydrodipicolinate (acetylase route): step 1/3. Catalyzes the transfer of an acetyl group from acetyl-CoA to tetrahydrodipicolinate. The protein is 2,3,4,5-tetrahydropyridine-2,6-dicarboxylate N-acetyltransferase of Halalkalibacterium halodurans (strain ATCC BAA-125 / DSM 18197 / FERM 7344 / JCM 9153 / C-125) (Bacillus halodurans).